The primary structure comprises 423 residues: Keratin, type I cytoskeletal 18 (423 aa).

Ser-2 is subject to N-acetylserine. Positions 2-71 are head; it reads SFTTRSTTFS…GLAGMGGIQT (70 aa). Residues Ser-7, Ser-11, Ser-16, and Ser-19 each carry the phosphoserine modification. Phosphoserine; alternate is present on residues Ser-31 and Ser-32. Residues Ser-31 and Ser-32 are each glycosylated (O-linked (GlcNAc) serine; alternate). Phosphoserine is present on Ser-35. Phosphotyrosine is present on Tyr-37. Residue Ser-43 is modified to Phosphoserine. The residue at position 46 (Arg-46) is an Omega-N-methylarginine. Ser-50 is modified (phosphoserine; alternate). A glycan (O-linked (GlcNAc) serine; alternate) is linked at Ser-50. Ser-52 is subject to Phosphoserine; by MAPKAPK2 and MAPKAPK3. Phosphoserine is present on residues Ser-57 and Ser-60. The tract at residues 62–366 is necessary for interaction with PNN; sequence GLAGMGGIQT…EALLNIKVKL (305 aa). The interval 69–121 is interaction with TRADD; it reads IQTEKETMQDLNDRLASYLDKVKSLETENRRLESKIREHLEKKGPQGVRDWGH. Residues 72-107 are coil 1A; it reads EKETMQDLNDRLASYLDKVKSLETENRRLESKIREH. In terms of domain architecture, IF rod spans 72–384; that stretch reads EKETMQDLND…RLLEDGEDFS (313 aa). Lys-73 participates in a covalent cross-link: Glycyl lysine isopeptide (Lys-Gly) (interchain with G-Cter in SUMO2). A phosphoserine mark is found at Ser-85 and Ser-92. The interval 108 to 125 is linker 1; it reads LEKKGPQGVRDWGHYFKI. N6-acetyllysine is present on Lys-124. Residues 126–217 form a coil 1B region; it reads IEDLRAQIFA…KNHEEEVQGL (92 aa). 2 positions are modified to phosphoserine: Ser-137 and Ser-170. The segment at 218 to 241 is linker 12; it reads EAQIASSGLTVEVDAPKSQDLSKI. Residues 236–384 are interaction with DNAJB6; it reads QDLSKIMADI…RLLEDGEDFS (149 aa). Lys-240 participates in a covalent cross-link: Glycyl lysine isopeptide (Lys-Gly) (interchain with G-Cter in SUMO2). The coil 2 stretch occupies residues 242 to 380; that stretch reads MADIRAQYEA…ATYRRLLEDG (139 aa). Thr-295 is modified (phosphothreonine). A Phosphoserine modification is found at Ser-316. Glycyl lysine isopeptide (Lys-Gly) (interchain with G-Cter in SUMO2) cross-links involve residues Lys-363 and Lys-365. A tail region spans residues 381–423; it reads EDFSLNDALDSSNSMQTVQKTTTRKIVDGRVVSETNDTRVLRH. 4 positions are modified to phosphoserine: Ser-384, Ser-391, Ser-392, and Ser-394. Residue Thr-397 is modified to Phosphothreonine.

It belongs to the intermediate filament family. In terms of assembly, heterotetramer of two type I and two type II keratins. KRT18 associates with KRT8. Interacts with PLEC isoform 1C, when in a heterodimer with KRT8. Interacts with PNN and mutated CFTR. Interacts with YWHAE, YWHAH and YWHAZ only when phosphorylated. Interacts with the thrombin-antithrombin complex. Interacts with DNAJB6, TCHP and TRADD. Interacts with FAM83H. Interacts with EPPK1. Interacts with PKP1 and PKP2. In terms of processing, phosphorylation increases by IL-6. Post-translationally, proteolytically cleaved by caspases during epithelial cell apoptosis. Cleavage occurs at Asp-231 by either caspase-3, caspas-6 or caspase-7. O-GlcNAcylation increases solubility, and decreases stability by inducing proteasomal degradation. Expressed in endoderm, intestinal epithelial cells and in most extraembryonic tissues.

It is found in the nucleus matrix. It localises to the cytoplasm. Its subcellular location is the perinuclear region. The protein localises to the nucleus. The protein resides in the nucleolus. When phosphorylated, plays a role in filament reorganization. Involved in the delivery of mutated CFTR to the plasma membrane. Involved in the uptake of thrombin-antithrombin complexes by hepatic cells. Together with KRT8, is involved in interleukin-6 (IL-6)-mediated barrier protection. The polypeptide is Keratin, type I cytoskeletal 18 (Krt18) (Mus musculus (Mouse)).